A 212-amino-acid chain; its full sequence is Ribonuclease P protein component 3 (212 aa).

This sequence belongs to the eukaryotic/archaeal RNase P protein component 3 family. In terms of assembly, consists of a catalytic RNA component and at least 5 protein subunits. Forms a heterotetrameric subcomplex with Rnp2. Reconstituted enzyme missing individual protein subunits is suboptimally active, showing each subunit contributes to optimization of activity.

The protein localises to the cytoplasm. The catalysed reaction is Endonucleolytic cleavage of RNA, removing 5'-extranucleotides from tRNA precursor.. Functionally, part of ribonuclease P, a protein complex that generates mature tRNA molecules by cleaving their 5'-ends. Not absolutely essential for activity in vitro, however it strongly stimulates activity. Binds RNase P RNA. The sequence is that of Ribonuclease P protein component 3 from Pyrococcus horikoshii (strain ATCC 700860 / DSM 12428 / JCM 9974 / NBRC 100139 / OT-3).